Here is a 337-residue protein sequence, read N- to C-terminus: Transcription initiation factor IIB (337 aa).

The TFIIB-type zinc finger occupies 37–68 (EKAVCPECGSRNLVHDYERAELVCGDCGLVID). The Zn(2+) site is built by Cys-41, Cys-44, Cys-60, and Cys-63. A run of 2 repeats spans residues 154–237 (SELD…SREL) and 248–329 (DYVP…ELAE).

It belongs to the TFIIB family.

Functionally, stabilizes TBP binding to an archaeal box-A promoter. Also responsible for recruiting RNA polymerase II to the pre-initiation complex (DNA-TBP-TFIIB). The chain is Transcription initiation factor IIB from Methanosarcina mazei (Methanosarcina frisia).